Here is a 504-residue protein sequence, read N- to C-terminus: Maturase K (504 aa).

The protein belongs to the intron maturase 2 family. MatK subfamily.

The protein resides in the plastid. It is found in the chloroplast. Its function is as follows. Usually encoded in the trnK tRNA gene intron. Probably assists in splicing its own and other chloroplast group II introns. The protein is Maturase K of Bombax buonopozense (Red-flowered silk cotton tree).